The primary structure comprises 479 residues: Aspartyl/glutamyl-tRNA(Asn/Gln) amidotransferase subunit B (479 aa).

The protein belongs to the GatB/GatE family. GatB subfamily. In terms of assembly, heterotrimer of A, B and C subunits.

The catalysed reaction is L-glutamyl-tRNA(Gln) + L-glutamine + ATP + H2O = L-glutaminyl-tRNA(Gln) + L-glutamate + ADP + phosphate + H(+). It carries out the reaction L-aspartyl-tRNA(Asn) + L-glutamine + ATP + H2O = L-asparaginyl-tRNA(Asn) + L-glutamate + ADP + phosphate + 2 H(+). Allows the formation of correctly charged Asn-tRNA(Asn) or Gln-tRNA(Gln) through the transamidation of misacylated Asp-tRNA(Asn) or Glu-tRNA(Gln) in organisms which lack either or both of asparaginyl-tRNA or glutaminyl-tRNA synthetases. The reaction takes place in the presence of glutamine and ATP through an activated phospho-Asp-tRNA(Asn) or phospho-Glu-tRNA(Gln). The chain is Aspartyl/glutamyl-tRNA(Asn/Gln) amidotransferase subunit B from Geobacter sulfurreducens (strain ATCC 51573 / DSM 12127 / PCA).